Reading from the N-terminus, the 310-residue chain is Peroxidase 44 (310 aa).

An N-terminal signal peptide occupies residues 1 to 20 (MRSITALFFLFCFLAPSALA). 4 disulfides stabilise this stretch: Cys31-Cys110, Cys64-Cys69, Cys116-Cys305, and Cys194-Cys218. His62 serves as the catalytic Proton acceptor. Asp63, Val66, Gly68, Asp70, and Ser72 together coordinate Ca(2+). Pro156 provides a ligand contact to substrate. Residue His187 participates in heme b binding. Ca(2+) is bound at residue Ser188. Ca(2+) contacts are provided by Asp229, Thr232, and Asp237.

It belongs to the peroxidase family. Classical plant (class III) peroxidase subfamily. Heme b serves as cofactor. It depends on Ca(2+) as a cofactor.

It localises to the secreted. The catalysed reaction is 2 a phenolic donor + H2O2 = 2 a phenolic radical donor + 2 H2O. Removal of H(2)O(2), oxidation of toxic reductants, biosynthesis and degradation of lignin, suberization, auxin catabolism, response to environmental stresses such as wounding, pathogen attack and oxidative stress. These functions might be dependent on each isozyme/isoform in each plant tissue. This chain is Peroxidase 44 (PER44), found in Arabidopsis thaliana (Mouse-ear cress).